A 195-amino-acid polypeptide reads, in one-letter code: Large ribosomal subunit protein uL18 (195 aa).

This sequence belongs to the universal ribosomal protein uL18 family. As to quaternary structure, part of the 50S ribosomal subunit. Contacts the 5S and 23S rRNAs.

This is one of the proteins that bind and probably mediate the attachment of the 5S RNA into the large ribosomal subunit, where it forms part of the central protuberance. The sequence is that of Large ribosomal subunit protein uL18 from Methanocaldococcus jannaschii (strain ATCC 43067 / DSM 2661 / JAL-1 / JCM 10045 / NBRC 100440) (Methanococcus jannaschii).